The following is a 1020-amino-acid chain: MSSTKTPISLTIKLNQFTDKPTGLDINPYHNSPIMWRNIIKQLSSRTPQKLLFSSKNRTYSFLGFGQDSIFKDNTKFRSLIPISCSNIVMGFQNLGEYLPGDEFLSRPLIKNQVNNNFCCRKSYASVAEAVAVSSTDAEEDVSVVDEVHELLTELKKEEKKQFAFRRRKQRMLTSGMGHRKYQTLKRRQVKVETEAWEQAAKEYKELLFDMCEQKLAPNLPYVKSLFLGWFEPLRDKIAEEQELCSQGKSKAAYAKYFYQLPADMMAVITMHKLMGLLMTGGDHGTARVVQAALVIGDAIEQEVRIHNFLEKTKKQKAEKDKQKEDGEHVTQEQEKLRKKVTNLMKKQKLRAVGQIVRRQDDSKPWGQDARAKVGSRLIDLLLQTAYIQPPANQLAVDPPDIRPAFVHSVRTVAKETKSASRRYGIIQCDELVFKGLERTARHMVIPYMPMLVPPVKWTGYDKGGHLYLPSYVMRTHGARQQREAVKRASRNQLQPVFEALDTLGNTKWRINKRVLSVVDRIWAGGGRLADLVDRDDAPLPEEPDTEDEALRTKWRWKVKSVKKENRERHSQRCDIELKLAVARKMKDEESFFYPHNVDFRGRAYPMHPHLNHLGSDICRGVLEFAEGRPLGESGLRWLKIHLANLFAGGVEKLSLEGRIGFTENHMDDIFDSSDKPLEGRRWWLNAEDPFQCLAVCINLSEAVRSSSPETSVSHIPVHQDGSCNGLQHYAALGRDKLGAAAVNLVAGEKPADVYSGIAARVLDIMKRDAQRDPAEFPDAVRARVLVNQVDRKLVKQTVMTSVYGVTYIGARDQIKRRLKERGAIADDSELFGAACYAAKVTLTALGEMFEAARSIMTWLGECAKIIASENEPVRWTTPLGLPVVQPYRKIGRHLIKTSLQILTLQRETEKVMVKRQRTAFPPNFIHSLDGSHMMMTAVACRRAGLNFAGVHDSYWTHACDVDKLNRILREKFVELYEAPILEKLLESFQTSYPTLLFPPLPERGDFDMRDVLESPYFFN.

The interval 314–336 (KKQKAEKDKQKEDGEHVTQEQEK) is disordered. Catalysis depends on residues Asp-721, Lys-796, and Asp-953.

The protein belongs to the phage and mitochondrial RNA polymerase family. As to expression, the highest levels of expression are detected in the mature leaves. The level of expression is lowest in the cotyledons.

The protein localises to the plastid. It localises to the chloroplast. It is found in the mitochondrion. It catalyses the reaction RNA(n) + a ribonucleoside 5'-triphosphate = RNA(n+1) + diphosphate. Its function is as follows. DNA-dependent RNA polymerase catalyzes the transcription of DNA into RNA using the four ribonucleoside triphosphates as substrates. The sequence is that of DNA-directed RNA polymerase 2, chloroplastic/mitochondrial (RPOT2) from Nicotiana sylvestris (Wood tobacco).